The sequence spans 224 residues: Uridylate kinase (224 aa).

9–10 (GS) is an ATP binding site. Glycine 43 serves as a coordination point for UMP. ATP is bound by residues glycine 44 and arginine 48. Residues aspartate 65 and 113–119 (VVPGQTT) each bind UMP. Positions 139, 145, and 148 each coordinate ATP.

Belongs to the UMP kinase family. As to quaternary structure, homohexamer.

The protein localises to the cytoplasm. It carries out the reaction UMP + ATP = UDP + ADP. It functions in the pathway pyrimidine metabolism; CTP biosynthesis via de novo pathway; UDP from UMP (UMPK route): step 1/1. Its activity is regulated as follows. Inhibited by UTP. Its function is as follows. Catalyzes the reversible phosphorylation of UMP to UDP. This is Uridylate kinase from Methanocella arvoryzae (strain DSM 22066 / NBRC 105507 / MRE50).